A 530-amino-acid chain; its full sequence is UDP-glucuronosyltransferase 2B7 (530 aa).

The N-terminal stretch at 1-17 is a signal peptide; sequence MPQKWISALLLLQISFC. Asparagine 316 carries an N-linked (GlcNAc...) asparagine glycan. Residues 374 to 380 and glutamate 400 contribute to the UDP-alpha-D-glucuronate site; that span reads THGGANG. The chain crosses the membrane as a helical span at residues 496 to 516; sequence IGFLLACVLAIVLLAVKCCLF.

It belongs to the UDP-glycosyltransferase family.

The protein resides in the endoplasmic reticulum membrane. The catalysed reaction is glucuronate acceptor + UDP-alpha-D-glucuronate = acceptor beta-D-glucuronoside + UDP + H(+). The enzyme catalyses 17alpha-estradiol + UDP-alpha-D-glucuronate = 17alpha-estradiol 17-O-(beta-D-glucuronate) + UDP + H(+). It catalyses the reaction 17beta-estradiol + UDP-alpha-D-glucuronate = 17beta-estradiol 17-O-(beta-D-glucuronate) + UDP + H(+). It carries out the reaction 2-hydroxy-17beta-estradiol + UDP-alpha-D-glucuronate = 2-hydroxy-17beta-estradiol 3-O-(beta-D-glucuronate) + UDP + H(+). The catalysed reaction is 4-hydroxy-17beta-estradiol + UDP-alpha-D-glucuronate = 17beta-estradiol 4-O-(beta-D-glucuronate) + UDP + H(+). The enzyme catalyses 4-hydroxyestrone + UDP-alpha-D-glucuronate = estrone 4-O-(beta-D-glucuronate) + UDP + H(+). It catalyses the reaction 16alpha-hydroxyestrone + UDP-alpha-D-glucuronate = 16alpha-hydroxyestrone 16-O-(beta-D-glucuronate) + UDP + H(+). It carries out the reaction 16alpha,17beta-estriol + UDP-alpha-D-glucuronate = 16alpha,17beta-estriol 16-O-(beta-D-glucuronate) + UDP + H(+). The catalysed reaction is 16beta,17beta-estriol + UDP-alpha-D-glucuronate = 16beta,17beta-estriol 16-O-(beta-D-glucuronate) + UDP + H(+). The enzyme catalyses 16alpha,17alpha-estriol + UDP-alpha-D-glucuronate = 16alpha,17alpha-estriol 16-O-(beta-D-glucuronate) + UDP + H(+). It catalyses the reaction 16alpha,17alpha-estriol + UDP-alpha-D-glucuronate = 16alpha,17alpha-estriol 17-O-(beta-D-glucuronate) + UDP + H(+). It carries out the reaction epitestosterone + UDP-alpha-D-glucuronate = epitestosterone 17-O-(beta-D-glucuronate) + UDP + H(+). The catalysed reaction is hyodeoxycholate + UDP-alpha-D-glucuronate = hyodeoxycholate 6-O-(beta-D-glucuronate) + UDP + H(+). The enzyme catalyses hyocholate + UDP-alpha-D-glucuronate = hyocholate 6-O-(beta-D-glucuronate) + UDP + H(+). It catalyses the reaction all-trans-retinoate + UDP-alpha-D-glucuronate = all-trans-retinoyl-1-O-(beta-D-glucuronate) + UDP. It carries out the reaction all-trans-4-hydroxyretinoate + UDP-alpha-D-glucuronate = all-trans-4-hydroxy-4-O-(beta-D-glucuronide)-retinoate + UDP + H(+). The catalysed reaction is (E)-ferulate + UDP-alpha-D-glucuronate = (E)-ferulic acid beta-D-glucuronate ester + UDP. The enzyme catalyses 8-iso-prostaglandin F2alpha + UDP-alpha-D-glucuronate = 8-iso-prostaglandin F2alpha-glucuronide + UDP + H(+). It catalyses the reaction 5-epi-5-F2t-IsoP + UDP-alpha-D-glucuronate = 5-epi-5-F2t-IsoP-glucuronide + UDP + H(+). It carries out the reaction (5Z,8Z,11Z,14Z)-eicosatetraenoate + UDP-alpha-D-glucuronate = O-[(5Z),(8Z),(11Z),(14Z)-eicosatetraenoyl]-beta-D-glucuronate + UDP. The catalysed reaction is 15-hydroxy-(5Z,8Z,11Z,13E)-eicosatetraenoate + UDP-alpha-D-glucuronate = 15-O-(beta-D-glucuronosyl)-(5Z,8Z,11Z,14Z)-eicosatetraenoate + UDP + H(+). The enzyme catalyses 20-hydroxy-(5Z,8Z,11Z,14Z)-eicosatetraenoate + UDP-alpha-D-glucuronate = 20-O-(beta-D-glucuronosyl)-(5Z,8Z,11Z,14Z)-eicosatetraenoate + UDP + H(+). It catalyses the reaction (E)-ferulate + UDP-alpha-D-glucuronate = (E)-4-O-(beta-D-glucuronosyl)-ferulate + UDP + H(+). It carries out the reaction prostaglandin B1 + UDP-alpha-D-glucuronate = 15-O-(beta-D-glucuronosyl)-prostaglandin B1 + UDP + H(+). The catalysed reaction is mycophenolate + UDP-alpha-D-glucuronate = mycophenolic acid O-acyl-beta-D-glucuronide + UDP. The enzyme catalyses losartan + UDP-alpha-D-glucuronate = losartan-2-N-beta-D-glucuronide + UDP. It catalyses the reaction candesartan + UDP-alpha-D-glucuronate = candesartan O-beta-D-glucuronoside + UDP. It carries out the reaction candesartan + UDP-alpha-D-glucuronate = candesartan-2-N-beta-D-glucuronide + UDP. The catalysed reaction is zolasartan + UDP-alpha-D-glucuronate = zolarsartan O-beta-D-glucuronoside + UDP. Its function is as follows. UDP-glucuronosyltransferase (UGT) that catalyzes phase II biotransformation reactions in which lipophilic substrates are conjugated with glucuronic acid to increase the metabolite's water solubility, thereby facilitating excretion into either the urine or bile. Essential for the elimination and detoxification of drugs, xenobiotics and endogenous compounds. Catalyzes the glucuronidation of endogenous steroid hormones such as androgens (epitestosterone, androsterone) and estrogens (estradiol, epiestradiol, estriol, catechol estrogens). Also regulates the levels of retinoic acid, a major metabolite of vitamin A involved in apoptosis, cellular growth and differentiation, and embryonic development. Contributes to bile acid (BA) detoxification by catalyzing the glucuronidation of BA substrates, which are natural detergents for dietary lipids absorption. Involved in the glucuronidation of arachidonic acid (AA) and AA-derived eicosanoids including 15-HETE, 20-HETE, PGE2, PGB1 and F2-isoprostanes (8-iso-PGF2alpha and 5-epi-5-F2t-IsoP). Involved in the glucuronidation of the phytochemical ferulic acid at the phenolic or the carboxylic acid group. Involved in the glucuronidation of the AGTR1 angiotensin receptor antagonist losartan, caderastan and zolarsatan, drugs which can inhibit the effect of angiotensin II. Also metabolizes mycophenolate, an immunosuppressive agent. This Rattus norvegicus (Rat) protein is UDP-glucuronosyltransferase 2B7.